We begin with the raw amino-acid sequence, 316 residues long: Acetyl-coenzyme A carboxylase carboxyl transferase subunit alpha (316 aa).

Residues 39–293 (KLEEKNAQLT…KKHLQANLTN (255 aa)) form the CoA carboxyltransferase C-terminal domain.

The protein belongs to the AccA family. As to quaternary structure, acetyl-CoA carboxylase is a heterohexamer composed of biotin carboxyl carrier protein (AccB), biotin carboxylase (AccC) and two subunits each of ACCase subunit alpha (AccA) and ACCase subunit beta (AccD).

The protein resides in the cytoplasm. It catalyses the reaction N(6)-carboxybiotinyl-L-lysyl-[protein] + acetyl-CoA = N(6)-biotinyl-L-lysyl-[protein] + malonyl-CoA. The protein operates within lipid metabolism; malonyl-CoA biosynthesis; malonyl-CoA from acetyl-CoA: step 1/1. Component of the acetyl coenzyme A carboxylase (ACC) complex. First, biotin carboxylase catalyzes the carboxylation of biotin on its carrier protein (BCCP) and then the CO(2) group is transferred by the carboxyltransferase to acetyl-CoA to form malonyl-CoA. This Coxiella burnetii (strain RSA 331 / Henzerling II) protein is Acetyl-coenzyme A carboxylase carboxyl transferase subunit alpha.